Here is a 444-residue protein sequence, read N- to C-terminus: Phosphoglucosamine mutase (444 aa).

The Phosphoserine intermediate role is filled by Ser101. 4 residues coordinate Mg(2+): Ser101, Asp240, Asp242, and Asp244. Ser101 is subject to Phosphoserine.

It belongs to the phosphohexose mutase family. Mg(2+) is required as a cofactor. Post-translationally, activated by phosphorylation.

The enzyme catalyses alpha-D-glucosamine 1-phosphate = D-glucosamine 6-phosphate. Its function is as follows. Catalyzes the conversion of glucosamine-6-phosphate to glucosamine-1-phosphate. This Aeromonas hydrophila subsp. hydrophila (strain ATCC 7966 / DSM 30187 / BCRC 13018 / CCUG 14551 / JCM 1027 / KCTC 2358 / NCIMB 9240 / NCTC 8049) protein is Phosphoglucosamine mutase.